Here is a 130-residue protein sequence, read N- to C-terminus: 3-aminoacrylate deaminase RutC (130 aa).

This sequence belongs to the RutC family.

The enzyme catalyses (Z)-3-aminoacrylate + H2O + H(+) = 3-oxopropanoate + NH4(+). Involved in pyrimidine catabolism. Catalyzes the deamination of 3-aminoacrylate to malonic semialdehyde, a reaction that can also occur spontaneously. RutC may facilitate the reaction and modulate the metabolic fitness, rather than catalyzing essential functions. This is 3-aminoacrylate deaminase RutC from Klebsiella variicola (strain At-22).